Here is a 184-residue protein sequence, read N- to C-terminus: Homeobox protein LOX10 (184 aa).

2 disordered regions span residues 1 to 29 (KIVS…PLQH) and 129 to 184 (YKTK…NKPG). Residues 76-135 (RRKRRILFSQAQIYELERRFRQQKYLSAPEREHLATFIGLTPTQVKIWFQNHRYKTKKSK) constitute a DNA-binding region (homeobox). Low complexity-rich tracts occupy residues 140-161 (NSPS…ASTT) and 174-184 (SNTTNNNNKPG).

The protein belongs to the NK-2 homeobox family. Expressed in a segmental pattern in the endoderm and in the cephalic nervous system.

The protein resides in the nucleus. In terms of biological role, may play a role in patterning the gut. The protein is Homeobox protein LOX10 (LOX10) of Helobdella triserialis (Leech).